We begin with the raw amino-acid sequence, 1281 residues long: MSTSINLKNTQFYKEVRGVSMENQRNLRSMSNRMLSVNFPPSKCALWDPAPMGDPFGLHFSYYRNPRLLVSEKALRLSSRHAKTGRKPFSCFLLGTFSVDEDEEGVTLTVDRFDPGREKTGSGSSKVPTAQLPGDFIIPCTISIGKGSNNVIVHTPEDFTSSFMSLQSHLHGKEALDLAKLLAMRAHITYTENMDNLHFDLHWAAVTVANTFESTPIKPVPIIPTALARNLGSHNNIAHLQGTHKSGYLTMDQTRKLLLVLESDPKVYMLPLVGIWLSGITHIHSPQVWAACLRYIFSSSIHERVLSESGSFLIILYSLTHKEPEFYECSPCVKHDPLGFQLLTCQDTLHLFKNAEVSKNPLLRFELSSECQELEADLFNETCKNKSTTVFKQSPLPNKLSTSDHDSGVEEEDFSPRPSPRPHPSVQQVSRIHPSVPELSLVFSSFFDPKSASHNPENRTRNNSPFSSTPQNVNNMFAGAPKPNKEPQPCDNQASGLLPRPAPSLNTNSTAMKPSKVKSSPADYQPPHLQSSNQIRRNSTSTSSAFSTPRSGCSPDSTVHQVKGSCEQEQNINGSAQPQGTTPLMRSGSYSRQVSSNFPNHNVTFPLHSRHVAEVAKPSPNLAPFHQTNVCTSCHSLVSCHSKNCWPAMGHLTYHTMENPPETCESVMPAYQNVVCPSVCCPQTAGKTEFCSPVDLVLLSPGRRDSLPLNPCSPHTCRHTPPPVIPTATGMLGLSTEAYRLFAEQDKQLKLLQAQIQRLLEAQAAESEPSKTTIPNNSKQKQVESVSTEQEIKTSVSIAVSTGASLFWNPPCPEKEESMDKQDDSAFCNEFSVNVNTEDTSHATITSSIRAVDIHSFSESTQLTDRGNCTASLHVSHERDDASYPLPDVQQDINNSKSLSNQTDHTESPNTAEIDSGVSAVPPEKFYQDLLAQVNNLLKTSSTEDEMTSTKIDSGHIIEKTESLPCNPTENNDKNVLKATLKQLKSLGVNIDMNTSELQATKADTADSASILACINPEAVIPRLNYMSFSNIGLSGFVPNGVDLSMEANAIALKYLNESQLNQLSLSHANKNKQSDSISYNSLLPGTTEKSMVGLSLISPSNMSFATKKYMKRYGLIESSDSSMEEPDLANASSFALTPMSSDSTSENRLFFNDSCKDGNFVTCEEQKRKNADVDSAIGWAHHPETNKLRNITNEISGKLINVAPLQEDRPLHFLKDLKARTKLSAGKAQFTQHPEKENTGDVQFFHEKHDGFSGKKSLGGPSTVGDILDVNRLRQLPKLF.

Polar residues-rich tracts occupy residues 390–401, 461–475, 528–560, 567–592, 770–790, and 891–913; these read VFKQSPLPNKLS, RNNS…NVNN, HLQS…STVH, EQEQ…SYSR, SKTT…STEQ, and QDIN…NTAE. Disordered regions lie at residues 390 to 431, 450 to 592, 765 to 790, and 879 to 915; these read VFKQ…QVSR, KSAS…SYSR, AESE…STEQ, and RDDA…AEID.

It localises to the cytoplasm. The protein localises to the cytosol. It is found in the cytoskeleton. The protein resides in the microtubule organizing center. Its subcellular location is the centrosome. It localises to the centriole. In terms of biological role, plays an essential role in early embryonic development. Plays an important role in the regulation of centriole duplication. The chain is SCL-interrupting locus protein homolog (stil) from Xenopus laevis (African clawed frog).